Here is a 162-residue protein sequence, read N- to C-terminus: 2-C-methyl-D-erythritol 2,4-cyclodiphosphate synthase (162 aa).

A divalent metal cation contacts are provided by Asp9 and His11. 4-CDP-2-C-methyl-D-erythritol 2-phosphate contacts are provided by residues 9-11 and 35-36; these read DVH and HS. His43 provides a ligand contact to a divalent metal cation. 4-CDP-2-C-methyl-D-erythritol 2-phosphate contacts are provided by residues 57–59, 62–66, 133–136, Phe140, and Arg143; these read DIG, FPDTD, and TTTE.

The protein belongs to the IspF family. Homotrimer. A divalent metal cation serves as cofactor.

The catalysed reaction is 4-CDP-2-C-methyl-D-erythritol 2-phosphate = 2-C-methyl-D-erythritol 2,4-cyclic diphosphate + CMP. The protein operates within isoprenoid biosynthesis; isopentenyl diphosphate biosynthesis via DXP pathway; isopentenyl diphosphate from 1-deoxy-D-xylulose 5-phosphate: step 4/6. Its function is as follows. Involved in the biosynthesis of isopentenyl diphosphate (IPP) and dimethylallyl diphosphate (DMAPP), two major building blocks of isoprenoid compounds. Catalyzes the conversion of 4-diphosphocytidyl-2-C-methyl-D-erythritol 2-phosphate (CDP-ME2P) to 2-C-methyl-D-erythritol 2,4-cyclodiphosphate (ME-CPP) with a corresponding release of cytidine 5-monophosphate (CMP). In Histophilus somni (strain 2336) (Haemophilus somnus), this protein is 2-C-methyl-D-erythritol 2,4-cyclodiphosphate synthase.